Reading from the N-terminus, the 724-residue chain is Putative mediator of RNA polymerase II transcription subunit 1 (724 aa).

3 disordered regions span residues 33-52, 147-167, and 486-524; these read SQQQ…VTSN, QQQQ…PLVE, and HRSS…NENG. Positions 140-200 form a coiled coil; that stretch reads YLNQQKEQQQ…QEMTNELNNK (61 aa). 2 stretches are compositionally biased toward low complexity: residues 147–164 and 488–510; these read QQQQ…QPQP and SSQQ…QQQQ. Residues 511 to 524 are compositionally biased toward polar residues; the sequence is KKLNSVDESMNENG.

The protein belongs to the Mediator complex subunit 1 family. Component of the Mediator complex.

The protein localises to the nucleus. Its function is as follows. Component of the Mediator complex, a coactivator involved in the regulated transcription of nearly all RNA polymerase II-dependent genes. Mediator functions as a bridge to convey information from gene-specific regulatory proteins to the basal RNA polymerase II transcription machinery. Mediator is recruited to promoters by direct interactions with regulatory proteins and serves as a scaffold for the assembly of a functional preinitiation complex with RNA polymerase II and the general transcription factors. The chain is Putative mediator of RNA polymerase II transcription subunit 1 (med1) from Dictyostelium discoideum (Social amoeba).